A 167-amino-acid chain; its full sequence is Small heat shock protein C1 (167 aa).

A sHSP domain is found at 59–167 (PFYESNSIKS…EQDAKEIPIN (109 aa)).

This sequence belongs to the small heat shock protein (HSP20) family.

The polypeptide is Small heat shock protein C1 (hspC1) (Rickettsia bellii (strain RML369-C)).